We begin with the raw amino-acid sequence, 419 residues long: Multifunctional CCA protein (419 aa).

2 residues coordinate ATP: Gly-8 and Arg-11. Positions 8 and 11 each coordinate CTP. 2 residues coordinate Mg(2+): Asp-21 and Asp-23. Arg-91, Arg-149, and Arg-152 together coordinate ATP. Arg-91, Arg-149, and Arg-152 together coordinate CTP. Positions 238–339 (CGVHLMMVID…VRLLERCDAF (102 aa)) constitute an HD domain.

It belongs to the tRNA nucleotidyltransferase/poly(A) polymerase family. Bacterial CCA-adding enzyme type 1 subfamily. As to quaternary structure, monomer. Can also form homodimers and oligomers. Requires Mg(2+) as cofactor. Ni(2+) serves as cofactor.

The enzyme catalyses a tRNA precursor + 2 CTP + ATP = a tRNA with a 3' CCA end + 3 diphosphate. It catalyses the reaction a tRNA with a 3' CCA end + 2 CTP + ATP = a tRNA with a 3' CCACCA end + 3 diphosphate. Functionally, catalyzes the addition and repair of the essential 3'-terminal CCA sequence in tRNAs without using a nucleic acid template. Adds these three nucleotides in the order of C, C, and A to the tRNA nucleotide-73, using CTP and ATP as substrates and producing inorganic pyrophosphate. tRNA 3'-terminal CCA addition is required both for tRNA processing and repair. Also involved in tRNA surveillance by mediating tandem CCA addition to generate a CCACCA at the 3' terminus of unstable tRNAs. While stable tRNAs receive only 3'-terminal CCA, unstable tRNAs are marked with CCACCA and rapidly degraded. The sequence is that of Multifunctional CCA protein from Variovorax paradoxus (strain S110).